An 868-amino-acid polypeptide reads, in one-letter code: Spindle and centriole-associated protein 1 (868 aa).

4 disordered regions span residues 129-154 (RTGF…DPGT), 172-201 (DDGG…HSNR), 229-250 (IAAQ…AEDQ), and 291-326 (KPLL…LASS). 2 stretches are compositionally biased toward polar residues: residues 190 to 200 (ELPNSLSPHSN) and 229 to 245 (IAAQ…SSEL). Thr236 is subject to Phosphothreonine. Residue Ser240 is modified to Phosphoserine. Positions 315-326 (SSSTTSADLASS) are enriched in low complexity. Residues 381-434 (RYLKESETQLRKEVETRQQLEQMLGDHRELIDALTAEILLLREENGAVQARLQQ) adopt a coiled-coil conformation. Disordered stretches follow at residues 630–664 (PQFV…LGDG) and 702–722 (SSGG…NASE). A compositionally biased stretch (low complexity) spans 634–649 (SLSQPPCSSPPSTQQS). Position 655 is a phosphoserine (Ser655). The span at 706-715 (EHGDGLREPS) shows a compositional bias: basic and acidic residues. The stretch at 736–764 (SSMEERIAELNRQSMEARSKLLQLIEQQK) forms a coiled coil. Ser772, Ser773, Ser776, and Ser831 each carry phosphoserine. Residues 805-868 (SSKCNTVSPV…GWFALSAHLP (64 aa)) are disordered. The segment covering 812–831 (SPVSGVSSRRSSGAISNSCS) has biased composition (low complexity).

Interacts with CEP120.

It localises to the cytoplasm. The protein localises to the cytoskeleton. The protein resides in the microtubule organizing center. It is found in the centrosome. Its subcellular location is the centriole. It localises to the spindle. Its function is as follows. Regulator required for centriole duplication, for proper bipolar spindle formation and chromosome congression in mitosis. In Rattus norvegicus (Rat), this protein is Spindle and centriole-associated protein 1 (Spice1).